The chain runs to 764 residues: Metabotropic glutamate receptor-like protein H (764 aa).

An N-terminal signal peptide occupies residues 1–20 (MKNILKILILILICINKINC). At 21 to 393 (LDGDGKQFRM…EVEFSQSIQN (373 aa)) the chain is on the extracellular side. 5 N-linked (GlcNAc...) asparagine glycosylation sites follow: N72, N260, N278, N344, and N379. The chain crosses the membrane as a helical span at residues 394–414 (GFSITTGILIGITILMMIGII). Residues 415-427 (KYSKTPSMRSASP) lie on the Cytoplasmic side of the membrane. Residues 428 to 448 (IFLNFILAGGIIVYIGIIVWV) traverse the membrane as a helical segment. Over 449 to 464 (GPMSTHSCNARLWLVT) the chain is Extracellular. A helical transmembrane segment spans residues 465–485 (LGFSTLIGSLVVKNFRIWLIF). At 486–500 (DNPELKSIKITNYQL) the chain is on the cytoplasmic side. A helical membrane pass occupies residues 501 to 521 (FPWVGACLVINIILMAILTSV). Topologically, residues 522–552 (GDLKQIDAMNIDSLGKYEYMKVCKMNSSGAS) are extracellular. Residue N547 is glycosylated (N-linked (GlcNAc...) asparagine). A helical transmembrane segment spans residues 553-573 (TLYTILAYFAALLLVGVFVSW). The Cytoplasmic portion of the chain corresponds to 574-587 (KIRIVDILEFNESG). Residues 588 to 608 (AIANTLYAISFCLFVIVPLMI) form a helical membrane-spanning segment. The Extracellular portion of the chain corresponds to 609–617 (SPQDMQSET). The chain crosses the membrane as a helical span at residues 618–638 (IILCTTGLFITTAALLIIFIP). At 639–764 (KFWRVFRKGA…IIVNDSENNN (126 aa)) the chain is on the cytoplasmic side. The interval 664–764 (ATARAESGSK…IIVNDSENNN (101 aa)) is disordered. The span at 671-690 (GSKGSNGNASSGNRTNRRGN) shows a compositional bias: low complexity. The span at 707–719 (ENQKEKEKIKDDV) shows a compositional bias: basic and acidic residues. Acidic residues predominate over residues 731 to 748 (FTDEASDTDNNEFNDIEL).

In the N-terminal section; belongs to the BMP lipoprotein family. This sequence in the C-terminal section; belongs to the G-protein coupled receptor 3 family. GABA-B receptor subfamily.

It is found in the membrane. This chain is Metabotropic glutamate receptor-like protein H (grlH), found in Dictyostelium discoideum (Social amoeba).